A 223-amino-acid chain; its full sequence is MFRSLVRKTTPLLAFGVGIAAFPKDWRKGQFGDKKLLVINDSVLEQIRSTDRYKQLVNDPNLKHYNSSHAFPDQHHKNYVNTGLLFGPDLMEIDPIVFLDEKNGELTSFYHLGDKLISQDGQIHNGIVSTILDEGLCSAGFPLLPSKKGVTASLSIDFKNQAPPQSTVVLHAKVKEAKGRKVVIEGYLETLPLNKSETPLLIAESKCVLVEPKWFKYFAWLQV.

The N-terminal 12 residues, 1 to 12 (MFRSLVRKTTPL), are a transit peptide targeting the mitochondrion.

The protein localises to the mitochondrion. This is an uncharacterized protein from Candida albicans (strain WO-1) (Yeast).